Consider the following 248-residue polypeptide: Pyridoxine 5'-phosphate synthase (248 aa).

A 3-amino-2-oxopropyl phosphate-binding site is contributed by Asn-11. Residue 13–14 participates in 1-deoxy-D-xylulose 5-phosphate binding; that stretch reads DH. Arg-22 lines the 3-amino-2-oxopropyl phosphate pocket. The active-site Proton acceptor is the His-47. 1-deoxy-D-xylulose 5-phosphate contacts are provided by Arg-49 and His-54. Residue Glu-74 is the Proton acceptor of the active site. Thr-104 is a 1-deoxy-D-xylulose 5-phosphate binding site. The Proton donor role is filled by His-198. Residues Gly-199 and 220-221 each bind 3-amino-2-oxopropyl phosphate; that span reads GH.

Belongs to the PNP synthase family. As to quaternary structure, homooctamer; tetramer of dimers.

It localises to the cytoplasm. The enzyme catalyses 3-amino-2-oxopropyl phosphate + 1-deoxy-D-xylulose 5-phosphate = pyridoxine 5'-phosphate + phosphate + 2 H2O + H(+). It participates in cofactor biosynthesis; pyridoxine 5'-phosphate biosynthesis; pyridoxine 5'-phosphate from D-erythrose 4-phosphate: step 5/5. In terms of biological role, catalyzes the complicated ring closure reaction between the two acyclic compounds 1-deoxy-D-xylulose-5-phosphate (DXP) and 3-amino-2-oxopropyl phosphate (1-amino-acetone-3-phosphate or AAP) to form pyridoxine 5'-phosphate (PNP) and inorganic phosphate. The protein is Pyridoxine 5'-phosphate synthase of Ruegeria pomeroyi (strain ATCC 700808 / DSM 15171 / DSS-3) (Silicibacter pomeroyi).